A 788-amino-acid chain; its full sequence is MGDLKGSRKRKAVTRDLDEEPGVVSGDELNLDALDGDLSDKSHDTEHSSDSEIELVDDLSSDDGEEYEDEFDSDEIPSDIESKPIREKSKPDRGVDIFVRGEEVTSDGELGDGYDDDKLNYRVTKDANGNERYIYDEINPDDNSDYSEADENANTIGNIPLSFYDQYPHIGYNINGKKIMRPAMGQALDTLLDSIELPKGFTGLTDPSTGKPLELNQDELELLRKVQMNEITEDGYDPYQPTIEYFTSKLEIMPLNAAPEPKRRFVPSKHEAKRVMKLVKAIREGRILPYKPLTEKAEAEEGVWTYDLWANETPRADHPMHIPAPKLPPPGYEESYHPPPEYLPDEKEKAAWLNTDPEDREREYLPADYDALRKVPGYDSFVKEKFERCLDLYLAPRVRRSKLNIDPESLLPKLPSPEELKPFPSTCATLFRGHSGRVRTLAIDPTGVWLASGGDDGTVRVWELLTGRQIWSVKLSDEEPVNVIRWRPSKDAVVLAAATGDSIHLIVPPILDPEMEKASLDIVDAGWGYAKTLTSDSTKKTSAQWTRPSPSLLDSGVQAVISLGYVAKSLSWHRRGDYFVTVCPGTATPVSLAIAIHTLSKHLTQHPFRRRLKGGGPPQAAHFHPSKPILFVANQRTIRSYDLSRQSLVKILQPGARWISSFDIHPTSSTTSGGDNLIVGSYDRRLLWHDVDLSPRPYKTLRYHQKAIRAVRYHSNYPLFADASDDGSLQIFHGSVTGDLLSNASIVPLKVLRGHKVTGELGVLDLDWHPREAWCVSAGADGTCRLWT.

The disordered stretch occupies residues 1 to 91 (MGDLKGSRKR…SKPIREKSKP (91 aa)). Over residues 38-50 (LSDKSHDTEHSSD) the composition is skewed to basic and acidic residues. Residues 51-78 (SEIELVDDLSSDDGEEYEDEFDSDEIPS) are compositionally biased toward acidic residues. The segment covering 80–91 (IESKPIREKSKP) has biased composition (basic and acidic residues). 6 WD repeats span residues 433–472 (GHSG…QIWS), 476–516 (SDEE…PEME), 613–651 (KGGG…LVKI), 654–699 (PGAR…RPYK), 703–742 (YHQK…DLLS), and 758–788 (TGEL…RLWT).

It belongs to the WD repeat BOP1/ERB1 family. In terms of assembly, component of the NOP7 complex, composed of ERB1, NOP7 and YTM1. The complex is held together by ERB1, which interacts with NOP7 via its N-terminal domain and with YTM1 via a high-affinity interaction between the seven-bladed beta-propeller domains of the 2 proteins. The NOP7 complex associates with the 66S pre-ribosome.

The protein resides in the nucleus. It localises to the nucleolus. Its subcellular location is the nucleoplasm. In terms of biological role, component of the NOP7 complex, which is required for maturation of the 25S and 5.8S ribosomal RNAs and formation of the 60S ribosome. This chain is Ribosome biogenesis protein ERB1, found in Ajellomyces capsulatus (strain NAm1 / WU24) (Darling's disease fungus).